Consider the following 297-residue polypeptide: Aspartate carbamoyltransferase catalytic subunit (297 aa).

Carbamoyl phosphate contacts are provided by arginine 49 and threonine 50. Residue lysine 77 coordinates L-aspartate. The carbamoyl phosphate site is built by arginine 99, histidine 129, and glutamine 132. L-aspartate contacts are provided by arginine 162 and arginine 215. 2 residues coordinate carbamoyl phosphate: glycine 256 and proline 257.

This sequence belongs to the aspartate/ornithine carbamoyltransferase superfamily. ATCase family. As to quaternary structure, heterododecamer (2C3:3R2) of six catalytic PyrB chains organized as two trimers (C3), and six regulatory PyrI chains organized as three dimers (R2).

It catalyses the reaction carbamoyl phosphate + L-aspartate = N-carbamoyl-L-aspartate + phosphate + H(+). Its pathway is pyrimidine metabolism; UMP biosynthesis via de novo pathway; (S)-dihydroorotate from bicarbonate: step 2/3. Its function is as follows. Catalyzes the condensation of carbamoyl phosphate and aspartate to form carbamoyl aspartate and inorganic phosphate, the committed step in the de novo pyrimidine nucleotide biosynthesis pathway. The polypeptide is Aspartate carbamoyltransferase catalytic subunit (Legionella pneumophila (strain Paris)).